The primary structure comprises 527 residues: MTDTAAQRHHRLQAHADLLTQTLRGIEKEGLRVDHQGVLARTAHPAGLGAALTNAHVTTDYSEALLELITGTHTDVDSLLGELRDTHRYVYGVLEGEYIWNQSMPATLPPEADIPIAWYGTSNTGMLKHVYRRGLAERYGKTMQCIAGVHYNFSLPDALWDVLVPDAPTPQARRSRGYISLIRNFTRYSWLLMYLFGSAPALAREFMRGRDHLLETLDPSTLYLPYATSLRMSDLGYQNKAQSRLKLCYNDLDTFLGRLYEAVTEPWPAYQAIGTRRDGQWIQLNTNVLQIENEYYSSIRPKRATGRCERPITALAERGVQYVEVRCLDIDPLTPEGISAETARFVDAFLLFCATSDSPFFPDNGYCQRSADNFAVVVKEGRKPGLMLDREGQAVSVPQWGHELLDQIAPYAALYDQALGGDAYAAALAAQRAKLDQPDLTPSARVLAALREGNVSFHDYSLDLSRRHADALRAQPLPAERTQAYAEAARQSVAEQLRLEQSDAVDFDTYVAHYHAALKNPLPSTAS.

It belongs to the glutamate--cysteine ligase type 1 family. Type 1 subfamily.

It catalyses the reaction L-cysteine + L-glutamate + ATP = gamma-L-glutamyl-L-cysteine + ADP + phosphate + H(+). The protein operates within sulfur metabolism; glutathione biosynthesis; glutathione from L-cysteine and L-glutamate: step 1/2. The protein is Glutamate--cysteine ligase of Bordetella bronchiseptica (strain ATCC BAA-588 / NCTC 13252 / RB50) (Alcaligenes bronchisepticus).